The following is a 418-amino-acid chain: Serine hydroxymethyltransferase (418 aa).

(6S)-5,6,7,8-tetrahydrofolate-binding positions include L121 and 125–127; that span reads GHL. K230 carries the post-translational modification N6-(pyridoxal phosphate)lysine. 355–357 provides a ligand contact to (6S)-5,6,7,8-tetrahydrofolate; sequence SPF.

This sequence belongs to the SHMT family. In terms of assembly, homodimer. Requires pyridoxal 5'-phosphate as cofactor.

The protein localises to the cytoplasm. The catalysed reaction is (6R)-5,10-methylene-5,6,7,8-tetrahydrofolate + glycine + H2O = (6S)-5,6,7,8-tetrahydrofolate + L-serine. It participates in one-carbon metabolism; tetrahydrofolate interconversion. Its pathway is amino-acid biosynthesis; glycine biosynthesis; glycine from L-serine: step 1/1. Its function is as follows. Catalyzes the reversible interconversion of serine and glycine with tetrahydrofolate (THF) serving as the one-carbon carrier. This reaction serves as the major source of one-carbon groups required for the biosynthesis of purines, thymidylate, methionine, and other important biomolecules. Also exhibits THF-independent aldolase activity toward beta-hydroxyamino acids, producing glycine and aldehydes, via a retro-aldol mechanism. The protein is Serine hydroxymethyltransferase of Streptococcus pyogenes serotype M6 (strain ATCC BAA-946 / MGAS10394).